The following is a 427-amino-acid chain: Glutamate-1-semialdehyde 2,1-aminomutase (427 aa).

Lys264 carries the N6-(pyridoxal phosphate)lysine modification.

Belongs to the class-III pyridoxal-phosphate-dependent aminotransferase family. HemL subfamily. In terms of assembly, homodimer. It depends on pyridoxal 5'-phosphate as a cofactor.

The protein localises to the cytoplasm. The catalysed reaction is (S)-4-amino-5-oxopentanoate = 5-aminolevulinate. It participates in porphyrin-containing compound metabolism; protoporphyrin-IX biosynthesis; 5-aminolevulinate from L-glutamyl-tRNA(Glu): step 2/2. This chain is Glutamate-1-semialdehyde 2,1-aminomutase, found in Campylobacter concisus (strain 13826).